The primary structure comprises 226 residues: Hand transcription factor 1 (226 aa).

Over residues 1–15 the composition is skewed to polar residues; sequence MVKSTTAGNNAVSSL. Residues 1–35 are disordered; that stretch reads MVKSTTAGNNAVSSLESTDSKKSRKEKSREKEHRR. The tract at residues 23-36 is basic motif; it reads SRKEKSREKEHRRA. The bHLH domain maps to 23–77; that stretch reads SRKEKSREKEHRRAQCINSAFEILQQHIPYLKSEERKSLPKIKTLRLAMQYIDHL. The tract at residues 37 to 77 is helix-loop-helix motif; that stretch reads QCINSAFEILQQHIPYLKSEERKSLPKIKTLRLAMQYIDHL.

It is found in the nucleus. In terms of biological role, probable transcription factor which regulates early embryonic myogenesis, in cooperation with transcription factors unc-120 and hlh-1. Involved in controlling the number and position of somatic gonadal precursor cells (SGPs) in the gonadal primordium, and embryonic body shape. In Caenorhabditis elegans, this protein is Hand transcription factor 1.